The chain runs to 123 residues: UPF0102 protein CLJ_B2665 (123 aa).

This sequence belongs to the UPF0102 family.

This Clostridium botulinum (strain 657 / Type Ba4) protein is UPF0102 protein CLJ_B2665.